Here is a 713-residue protein sequence, read N- to C-terminus: tRNA 5-methylaminomethyl-2-thiouridine biosynthesis bifunctional protein MnmC (713 aa).

Residues 1 to 300 (MTAEPNKPCQ…MAAILSSATP (300 aa)) are tRNA (mnm(5)s(2)U34)-methyltransferase. The interval 306–713 (IGGGLASAHL…LRKLLKGKAL (408 aa)) is FAD-dependent cmnm(5)s(2)U34 oxidoreductase.

In the N-terminal section; belongs to the methyltransferase superfamily. tRNA (mnm(5)s(2)U34)-methyltransferase family. It in the C-terminal section; belongs to the DAO family. The cofactor is FAD.

The protein localises to the cytoplasm. The catalysed reaction is 5-aminomethyl-2-thiouridine(34) in tRNA + S-adenosyl-L-methionine = 5-methylaminomethyl-2-thiouridine(34) in tRNA + S-adenosyl-L-homocysteine + H(+). Catalyzes the last two steps in the biosynthesis of 5-methylaminomethyl-2-thiouridine (mnm(5)s(2)U) at the wobble position (U34) in tRNA. Catalyzes the FAD-dependent demodification of cmnm(5)s(2)U34 to nm(5)s(2)U34, followed by the transfer of a methyl group from S-adenosyl-L-methionine to nm(5)s(2)U34, to form mnm(5)s(2)U34. In Shewanella baltica (strain OS155 / ATCC BAA-1091), this protein is tRNA 5-methylaminomethyl-2-thiouridine biosynthesis bifunctional protein MnmC.